The sequence spans 280 residues: Probable endonuclease 4 (280 aa).

Residues His-69, His-109, Glu-145, Asp-179, His-182, His-216, Asp-229, His-231, and Glu-261 each contribute to the Zn(2+) site.

The protein belongs to the AP endonuclease 2 family. It depends on Zn(2+) as a cofactor.

It catalyses the reaction Endonucleolytic cleavage to 5'-phosphooligonucleotide end-products.. Endonuclease IV plays a role in DNA repair. It cleaves phosphodiester bonds at apurinic or apyrimidinic (AP) sites, generating a 3'-hydroxyl group and a 5'-terminal sugar phosphate. The protein is Probable endonuclease 4 of Photorhabdus laumondii subsp. laumondii (strain DSM 15139 / CIP 105565 / TT01) (Photorhabdus luminescens subsp. laumondii).